We begin with the raw amino-acid sequence, 388 residues long: Glycoprotein-N-acetylgalactosamine 3-beta-galactosyltransferase 1 (388 aa).

Over 1-12 the chain is Cytoplasmic; it reads MAPISHYIGKTS. The helical; Signal-anchor for type II membrane protein transmembrane segment at 13-30 threads the bilayer; it reads LTTLAIGIAIGITVSNIV. Over 31–388 the chain is Lumenal; the sequence is KFSSTQRRHF…LAQTDSKHIS (358 aa). A disordered region spans residues 43–65; sequence SGYIPDSPHSHGENDFVEGPDDS. N-linked (GlcNAc...) asparagine glycosylation occurs at Asn-80. Residues Cys-95 and Cys-119 are joined by a disulfide bond. 7 residues coordinate UDP: Met-98, Asn-100, Glu-142, Gly-143, Arg-144, Lys-150, and Asp-173. Asp-173 and Asp-175 together coordinate Mn(2+). A disulfide bond links Cys-238 and Cys-253. An a glycoprotein-binding site is contributed by Trp-292. Cysteines 307 and 308 form a disulfide. The UDP site is built by His-316 and Tyr-317. His-316 contacts Mn(2+). The tract at residues 344 to 388 is disordered; it reads STEEQDHGSSHKDTDAMKPEGKGMEDKEDEETNISLAQTDSKHIS. Basic and acidic residues predominate over residues 347–368; it reads EQDHGSSHKDTDAMKPEGKGME. N-linked (GlcNAc...) asparagine glycosylation is present at Asn-376.

Belongs to the glycosyltransferase 31 family. Beta3-Gal-T subfamily. Homodimer; disulfide-linked. It depends on Mn(2+) as a cofactor.

Its subcellular location is the membrane. It catalyses the reaction an N-acetyl-alpha-D-galactosaminyl derivative + UDP-alpha-D-galactose = a beta-D-galactosyl-(1-&gt;3)-N-acetyl-alpha-D-galactosaminyl derivative + UDP + H(+). It functions in the pathway protein modification; protein glycosylation. Its function is as follows. Glycosyltransferase that generates the core 1 O-glycan Gal-beta1-3GalNAc-alpha1-Ser/Thr (T antigen), which is a precursor for many extended O-glycans in glycoproteins. The protein is Glycoprotein-N-acetylgalactosamine 3-beta-galactosyltransferase 1 of Biomphalaria glabrata (Bloodfluke planorb).